Consider the following 169-residue polypeptide: Putative ribonuclease VapC50 (169 aa).

Toxic component of a type II toxin-antitoxin (TA) system. An RNase. The cognate antitoxin is VapB50. This Mycobacterium tuberculosis (strain ATCC 25618 / H37Rv) protein is Putative ribonuclease VapC50.